Here is a 317-residue protein sequence, read N- to C-terminus: Integrin-binding sialoprotein (317 aa).

A signal peptide spans 1 to 16; sequence MKTALILLSILGMACA. Phosphoserine is present on residues Ser31, Ser67, Ser74, Ser75, Ser94, and Ser100. The interval 58–254 is disordered; it reads FPVQGSSDSS…RTTSPPFGKT (197 aa). Residues 66 to 102 are compositionally biased toward acidic residues; that stretch reads SSEENGDDSSEEEEEEEETSNEGENNEESNEDEDSEA. The N-linked (GlcNAc...) asparagine glycan is linked to Asn104. Thr119 and Thr122 each carry an O-linked (GalNAc...) threonine glycan. At Ser149 the chain carries Phosphoserine. The segment covering 149-173 has biased composition (acidic residues); the sequence is SDEEEEEEEEGNENEESEAEVDENE. N-linked (GlcNAc...) asparagine glycosylation is found at Asn177, Asn182, and Asn190. Residues 222–232 are compositionally biased toward polar residues; sequence KGTSKTTTSPN. O-linked (GalNAc...) threonine glycosylation is found at Thr227, Thr228, Thr229, Thr238, and Thr239. Position 280 is a phosphoserine (Ser280). The Integrin-binding motif motif lies at 286–288; that stretch reads RGD. 2 positions are modified to sulfotyrosine: Tyr313 and Tyr314.

As to quaternary structure, monomer. Interacts with integrins; the interaction promotes cell adhesion. N-glycosylated; glycans consist of sialylated and core-fucosylated bi-, tri- and tetraantennary chains. In terms of processing, O-glycosylated at eight sites; mucin-type glycans contain Gal, GlcNAc, GalNAc and terminal NeuAc. Expressed in bone (at protein level). Expressed in trophoblast cells of placenta (at protein level). Expressed in brain.

It is found in the secreted. In terms of biological role, binds tightly to hydroxyapatite. Appears to form an integral part of the mineralized matrix. Probably important to cell-matrix interaction. Promotes adhesion and migration of various cells via the alpha-V/beta-3 integrin receptor (ITGAV:ITGB3). The polypeptide is Integrin-binding sialoprotein (IBSP) (Homo sapiens (Human)).